We begin with the raw amino-acid sequence, 503 residues long: ESX-5 secretion system protein EccD5 (503 aa).

Transmembrane regions (helical) follow at residues 137–157, 169–189, 200–220, 224–244, 250–270, 272–292, 359–379, 414–434, 443–463, and 480–500; these read VVAV…ASGV, LTTI…MMLL, VADI…ASAP, VGSP…ALAL, RLAI…ASLS, MVAA…CVVM, FLSG…TSLC, ITLA…YALV, IVAS…AVVP, and YLCL…YAAI.

It belongs to the EccD/Snm4 family. As to quaternary structure, part of the ESX-5 / type VII secretion system (T7SS), which is composed of cytosolic and membrane components. The ESX-5 membrane complex is composed of EccB5, EccC5, EccD5 and EccE5.

It is found in the cell inner membrane. In terms of biological role, part of the ESX-5 specialized secretion system, which is responsible for the secretion of EsxN and a number of PE_PGRS and PPE proteins. This component is essential for ESX-5 complex stability and secretion. This chain is ESX-5 secretion system protein EccD5, found in Mycobacterium marinum (strain ATCC BAA-535 / M).